The chain runs to 92 residues: Small ribosomal subunit protein uS19c (92 aa).

It belongs to the universal ribosomal protein uS19 family.

The protein localises to the plastid. Its subcellular location is the chloroplast. Its function is as follows. Protein S19 forms a complex with S13 that binds strongly to the 16S ribosomal RNA. This chain is Small ribosomal subunit protein uS19c (rps19), found in Chlorella vulgaris (Green alga).